We begin with the raw amino-acid sequence, 345 residues long: Beta-hexosaminidase (345 aa).

Substrate-binding positions include Asp-60, Arg-68, Arg-132, and 162–163; that span reads KH. Catalysis depends on His-175, which acts as the Proton donor/acceptor. The Nucleophile role is filled by Asp-247.

It belongs to the glycosyl hydrolase 3 family. NagZ subfamily.

The protein localises to the cytoplasm. It carries out the reaction Hydrolysis of terminal non-reducing N-acetyl-D-hexosamine residues in N-acetyl-beta-D-hexosaminides.. The protein operates within cell wall biogenesis; peptidoglycan recycling. Functionally, plays a role in peptidoglycan recycling by cleaving the terminal beta-1,4-linked N-acetylglucosamine (GlcNAc) from peptide-linked peptidoglycan fragments, giving rise to free GlcNAc, anhydro-N-acetylmuramic acid and anhydro-N-acetylmuramic acid-linked peptides. The protein is Beta-hexosaminidase of Actinobacillus pleuropneumoniae serotype 3 (strain JL03).